The primary structure comprises 149 residues: UPF0178 protein lwe1471 (149 aa).

This sequence belongs to the UPF0178 family.

This Listeria welshimeri serovar 6b (strain ATCC 35897 / DSM 20650 / CCUG 15529 / CIP 8149 / NCTC 11857 / SLCC 5334 / V8) protein is UPF0178 protein lwe1471.